A 259-amino-acid chain; its full sequence is Complement factor D (259 aa).

Residues M1–A21 form the signal peptide. A propeptide spans Q22–R26 (activation peptide). A Peptidase S1 domain is found at I27–A254. C52 and C68 are joined by a disulfide. Catalysis depends on charge relay system residues H67 and D115. Cystine bridges form between C149-C215, C180-C196, and C205-C230. The active-site Charge relay system is the S209. Residues T224–R228 form a self-inhibitor loop region.

Belongs to the peptidase S1 family. In terms of processing, CFD is activated by the removal of 5 residues at the N-terminus, named activation peptide, by the MASP-3 isoform of MASP1.

Its subcellular location is the secreted. It carries out the reaction Selective cleavage of Arg-|-Lys bond in complement factor B when in complex with complement subcomponent C3b or with cobra venom factor.. With respect to regulation, circulates in plasma in a mature but self-inhibited form. Activated by factor B (CFB), which displaces the self-inhibition loop. Associates with CFB complexed with complement C3b. Functionally, serine protease that initiates the alternative pathway of the complement system, a cascade of proteins that leads to phagocytosis and breakdown of pathogens and signaling that strengthens the adaptive immune system. In contrast to other complement pathways (classical, lectin and GZMK) that are directly activated by pathogens or antigen-antibody complexes, the alternative complement pathway is initiated by the spontaneous hydrolysis of complement C3. The alternative complement pathway acts as an amplification loop that enhances complement activation by mediating the formation of C3 and C5 convertases. Activated CFD cleaves factor B (CFB) when the latter is complexed with complement C3b, activating the C3 convertase of the alternative pathway. In Sus scrofa (Pig), this protein is Complement factor D (CFD).